Consider the following 158-residue polypeptide: Transcriptional regulator MraZ (158 aa).

2 consecutive SpoVT-AbrB domains span residues 7–57 (THQN…PTAA) and 86–129 (AYPV…EPAA). Residues 133–158 (RRAEARTRSRQLALPAQGRRQGGADA) form a disordered region.

The protein belongs to the MraZ family. In terms of assembly, forms oligomers.

The protein localises to the cytoplasm. It localises to the nucleoid. The chain is Transcriptional regulator MraZ from Gluconacetobacter diazotrophicus (strain ATCC 49037 / DSM 5601 / CCUG 37298 / CIP 103539 / LMG 7603 / PAl5).